A 221-amino-acid polypeptide reads, in one-letter code: Ktr system potassium uptake protein C (221 aa).

One can recognise an RCK N-terminal domain in the interval 2 to 118 (KKEFAVIGLG…LSKIGADHIV (117 aa)). NAD(+) is bound by residues arginine 12, 32–34 (DID), 52–53 (DS), 74–76 (IGE), 99–101 (KAQ), histidine 105, and glutamate 121. Residues 135–219 (NNVLDYLELS…ISRFEKRVLH (85 aa)) form the RCK C-terminal domain.

Belongs to the KtrA potassium transport family. Homodimer, tetramer (dimer of homodimer) and octamer (tetramer of homodimer). Part of the KtrCD complex formed by an octameric catalytic ring of KtrC and a membrane associated dimer of KtrD forming a potassium channel.

It is found in the cell membrane. Catalytic subunit of the KtrCD potassium uptake transporter. The 2 major potassium transporter complexes KtrAB and KtrCD confer resistance to both suddenly imposed and prolonged osmotic stress. The polypeptide is Ktr system potassium uptake protein C (ktrC) (Bacillus subtilis (strain 168)).